Consider the following 141-residue polypeptide: Ribonuclease P protein component (141 aa).

2 disordered regions span residues 37-56 (RTEE…VGFT) and 114-141 (RRIT…VNGK). The span at 114-124 (RRITAKGERRS) shows a compositional bias: basic and acidic residues.

Belongs to the RnpA family. As to quaternary structure, consists of a catalytic RNA component (M1 or rnpB) and a protein subunit.

The enzyme catalyses Endonucleolytic cleavage of RNA, removing 5'-extranucleotides from tRNA precursor.. Functionally, RNaseP catalyzes the removal of the 5'-leader sequence from pre-tRNA to produce the mature 5'-terminus. It can also cleave other RNA substrates such as 4.5S RNA. The protein component plays an auxiliary but essential role in vivo by binding to the 5'-leader sequence and broadening the substrate specificity of the ribozyme. In Brucella melitensis biotype 2 (strain ATCC 23457), this protein is Ribonuclease P protein component.